The chain runs to 113 residues: Small ribosomal subunit protein uS14m (113 aa).

This sequence belongs to the universal ribosomal protein uS14 family. In terms of assembly, component of the mitochondrial small ribosomal subunit (mt-SSU). Mature N.crassa 74S mitochondrial ribosomes consist of a small (37S) and a large (54S) subunit. The 37S small subunit contains a 16S ribosomal RNA (16S mt-rRNA) and 32 different proteins. The 54S large subunit contains a 23S rRNA (23S mt-rRNA) and 42 different proteins.

It localises to the mitochondrion. Its function is as follows. Component of the mitochondrial ribosome (mitoribosome), a dedicated translation machinery responsible for the synthesis of mitochondrial genome-encoded proteins, including at least some of the essential transmembrane subunits of the mitochondrial respiratory chain. The mitoribosomes are attached to the mitochondrial inner membrane and translation products are cotranslationally integrated into the membrane. This Neurospora crassa (strain ATCC 24698 / 74-OR23-1A / CBS 708.71 / DSM 1257 / FGSC 987) protein is Small ribosomal subunit protein uS14m (mrp2).